The primary structure comprises 349 residues: RING-H2 finger protein ATL48 (349 aa).

In terms of domain architecture, HIG1 spans 1–85 (MSSVEPDMED…DNPWKKLLLS (85 aa)). The residue at position 2 (Ser2) is an N-acetylserine. A run of 3 helical transmembrane segments spans residues 21 to 41 (PLVP…LISF), 55 to 75 (ARVV…YYYG), and 121 to 141 (CLVI…YLIF). An RING-type; atypical zinc finger spans residues 207 to 249 (CAVCLNEFSDTDKLRLLPVCSHAFHLHCIDTWLLSNSTCPLCR).

It belongs to the RING-type zinc finger family. ATL subfamily.

The protein resides in the membrane. It carries out the reaction S-ubiquitinyl-[E2 ubiquitin-conjugating enzyme]-L-cysteine + [acceptor protein]-L-lysine = [E2 ubiquitin-conjugating enzyme]-L-cysteine + N(6)-ubiquitinyl-[acceptor protein]-L-lysine.. The protein operates within protein modification; protein ubiquitination. This chain is RING-H2 finger protein ATL48 (ATL48), found in Arabidopsis thaliana (Mouse-ear cress).